The chain runs to 320 residues: MPEPGPRMNGFSLGELCWLFCCPPCPSRIAAKLAFLPPEPTYTVLAPEQRAPAPAATPAPAPAAQPAPAEEGAGPGACSLHLSERADWQYSQRELDAVEVFFSRTARDNRLGCMFVRCAPSSRYTLLFSHGNAVDLGQMCSFYIGLGSRINCNIFSYDYSGYGVSSGKPSEKNLYADIDAAWQALRTRYGVSPENIILYGQSIGTVPTVDLASRYECAAVILHSPLMSGLRVAFPDTRKTYCFDAFPSIDKISKVTSPVLVIHGTEDEVIDFSHGLAMYERCPRAVEPLWVEGAGHNDIELYAQYLERLKQFISHELPNS.

A disordered region spans residues 50–75 (RAPAPAATPAPAPAAQPAPAEEGAGP). The span at 55-65 (AATPAPAPAAQ) shows a compositional bias: pro residues. Residues Ser202, Asp267, and His296 each act as charge relay system in the active site.

This sequence belongs to the AB hydrolase superfamily. ABHD17 family. Palmitoylated on cysteine residues located in a cysteine cluster at the N-terminus which promotes membrane localization. Palmitoylation is required for post-synaptic localization and for depalmitoylating activity towards DLG4/PSD95.

It is found in the recycling endosome membrane. The protein resides in the cell projection. The protein localises to the dendritic spine. Its subcellular location is the postsynaptic density membrane. It carries out the reaction S-hexadecanoyl-L-cysteinyl-[protein] + H2O = L-cysteinyl-[protein] + hexadecanoate + H(+). Its function is as follows. Hydrolyzes fatty acids from S-acylated cysteine residues in proteins. Has depalmitoylating activity towards DLG4/PSD95. The polypeptide is Alpha/beta hydrolase domain-containing protein 17C (Mus musculus (Mouse)).